Reading from the N-terminus, the 63-residue chain is Large ribosomal subunit protein bL35 (63 aa).

This sequence belongs to the bacterial ribosomal protein bL35 family.

The sequence is that of Large ribosomal subunit protein bL35 from Thermobifida fusca (strain YX).